Here is a 225-residue protein sequence, read N- to C-terminus: Ribulose-phosphate 3-epimerase (225 aa).

Substrate is bound at residue serine 9. A divalent metal cation contacts are provided by histidine 34, aspartate 36, and histidine 68. The Proton acceptor role is filled by aspartate 36. Residues histidine 68, 144–147, 177–179, and 199–200 contribute to the substrate site; these read GFGG, DGG, and GS. Aspartate 177 contacts a divalent metal cation. Aspartate 177 serves as the catalytic Proton donor.

The protein belongs to the ribulose-phosphate 3-epimerase family. It depends on a divalent metal cation as a cofactor.

It catalyses the reaction D-ribulose 5-phosphate = D-xylulose 5-phosphate. It functions in the pathway carbohydrate degradation. In terms of biological role, catalyzes the reversible epimerization of D-ribulose 5-phosphate to D-xylulose 5-phosphate. This is Ribulose-phosphate 3-epimerase from Escherichia coli O157:H7.